The primary structure comprises 188 residues: Elongation factor P (188 aa).

The residue at position 34 (K34) is an N6-(3,6-diaminohexanoyl)-5-hydroxylysine.

Belongs to the elongation factor P family. In terms of processing, may be beta-lysylated on the epsilon-amino group of Lys-34 by the combined action of EpmA and EpmB, and then hydroxylated on the C5 position of the same residue by EpmC (if this protein is present). Lysylation is critical for the stimulatory effect of EF-P on peptide-bond formation. The lysylation moiety may extend toward the peptidyltransferase center and stabilize the terminal 3-CCA end of the tRNA. Hydroxylation of the C5 position on Lys-34 may allow additional potential stabilizing hydrogen-bond interactions with the P-tRNA.

The protein resides in the cytoplasm. Its pathway is protein biosynthesis; polypeptide chain elongation. In terms of biological role, involved in peptide bond synthesis. Alleviates ribosome stalling that occurs when 3 or more consecutive Pro residues or the sequence PPG is present in a protein, possibly by augmenting the peptidyl transferase activity of the ribosome. Modification of Lys-34 is required for alleviation. This chain is Elongation factor P, found in Xanthomonas campestris pv. campestris (strain B100).